The chain runs to 289 residues: UPF0276 protein BP2925 (289 aa).

The protein belongs to the UPF0276 family.

The protein is UPF0276 protein BP2925 of Bordetella pertussis (strain Tohama I / ATCC BAA-589 / NCTC 13251).